The sequence spans 513 residues: Meiotically up-regulated gene 133 protein (513 aa).

The protein belongs to the UPF0300 family.

The protein localises to the golgi apparatus. The protein resides in the vacuole membrane. Has a role in meiosis. The polypeptide is Meiotically up-regulated gene 133 protein (mug133) (Schizosaccharomyces pombe (strain 972 / ATCC 24843) (Fission yeast)).